The following is an 86-amino-acid chain: Photosystem I reaction center subunit PsaK 1 (86 aa).

Positions 1–8 are excised as a propeptide; the sequence is MLTSTLLA. Helical transmembrane passes span 14-34 and 60-80; these read LEWS…AITF and PALL…VLGL.

The protein belongs to the PsaG/PsaK family. The cyanobacterial PSI reaction center is composed of one copy each of PsaA,B,C,D,E,F,I,J,K,L,M and X, and forms dimeric and tetrameric complexes.

It localises to the cellular thylakoid membrane. This is Photosystem I reaction center subunit PsaK 1 (psaK1) from Nostoc sp. (strain PCC 7120 / SAG 25.82 / UTEX 2576).